The sequence spans 632 residues: Biosynthetic arginine decarboxylase (632 aa).

Lys-101 bears the N6-(pyridoxal phosphate)lysine mark. Residue 281–291 participates in substrate binding; the sequence is FDVGGGLGVDY.

Belongs to the Orn/Lys/Arg decarboxylase class-II family. SpeA subfamily. Mg(2+) serves as cofactor. The cofactor is pyridoxal 5'-phosphate.

It catalyses the reaction L-arginine + H(+) = agmatine + CO2. It participates in amine and polyamine biosynthesis; agmatine biosynthesis; agmatine from L-arginine: step 1/1. Catalyzes the biosynthesis of agmatine from arginine. The polypeptide is Biosynthetic arginine decarboxylase (Salmonella dublin (strain CT_02021853)).